The primary structure comprises 340 residues: Glyceraldehyde-3-phosphate dehydrogenase, cytosolic (340 aa).

NAD(+) contacts are provided by residues 16–17 (RI), Asp-38, and Arg-85. Residues 156–158 (SCT), Thr-187, 216–217 (TG), and Arg-239 contribute to the D-glyceraldehyde 3-phosphate site. Cys-157 (nucleophile) is an active-site residue. Residue Asn-321 coordinates NAD(+).

It belongs to the glyceraldehyde-3-phosphate dehydrogenase family. As to quaternary structure, homotetramer.

It localises to the cytoplasm. It catalyses the reaction D-glyceraldehyde 3-phosphate + phosphate + NAD(+) = (2R)-3-phospho-glyceroyl phosphate + NADH + H(+). Its pathway is carbohydrate degradation; glycolysis; pyruvate from D-glyceraldehyde 3-phosphate: step 1/5. Key enzyme in glycolysis that catalyzes the first step of the pathway by converting D-glyceraldehyde 3-phosphate (G3P) into 3-phospho-D-glyceroyl phosphate. Essential for the maintenance of cellular ATP levels and carbohydrate metabolism. The polypeptide is Glyceraldehyde-3-phosphate dehydrogenase, cytosolic (GAPC) (Pinus sylvestris (Scotch pine)).